The chain runs to 365 residues: 2-aminoethylphosphonate--pyruvate transaminase (365 aa).

Position 194 is an N6-(pyridoxal phosphate)lysine (K194).

It belongs to the class-V pyridoxal-phosphate-dependent aminotransferase family. PhnW subfamily. As to quaternary structure, homodimer. Pyridoxal 5'-phosphate is required as a cofactor.

The catalysed reaction is (2-aminoethyl)phosphonate + pyruvate = phosphonoacetaldehyde + L-alanine. Functionally, involved in phosphonate degradation. The sequence is that of 2-aminoethylphosphonate--pyruvate transaminase from Bacillus cereus (strain G9842).